The sequence spans 154 residues: Putative ankyrin repeat protein RBE_1220 (154 aa).

ANK repeat units follow at residues 78-108 (EKVN…NVDQ) and 113-142 (NSRT…ILIL).

This chain is Putative ankyrin repeat protein RBE_1220, found in Rickettsia bellii (strain RML369-C).